We begin with the raw amino-acid sequence, 343 residues long: Anthranilate phosphoribosyltransferase (343 aa).

5-phospho-alpha-D-ribose 1-diphosphate-binding positions include glycine 84, 87-88 (GD), threonine 92, 94-97 (NIST), 112-120 (KHGNRGVSS), and serine 124. Anthranilate is bound at residue glycine 84. Serine 96 contributes to the Mg(2+) binding site. Asparagine 115 lines the anthranilate pocket. Residue arginine 170 coordinates anthranilate. Aspartate 229 and glutamate 230 together coordinate Mg(2+).

It belongs to the anthranilate phosphoribosyltransferase family. Homodimer. Mg(2+) is required as a cofactor.

It catalyses the reaction N-(5-phospho-beta-D-ribosyl)anthranilate + diphosphate = 5-phospho-alpha-D-ribose 1-diphosphate + anthranilate. The protein operates within amino-acid biosynthesis; L-tryptophan biosynthesis; L-tryptophan from chorismate: step 2/5. Its function is as follows. Catalyzes the transfer of the phosphoribosyl group of 5-phosphorylribose-1-pyrophosphate (PRPP) to anthranilate to yield N-(5'-phosphoribosyl)-anthranilate (PRA). This chain is Anthranilate phosphoribosyltransferase, found in Burkholderia multivorans (strain ATCC 17616 / 249).